A 239-amino-acid chain; its full sequence is Leucyl/phenylalanyl-tRNA--protein transferase (239 aa).

Belongs to the L/F-transferase family.

It is found in the cytoplasm. It catalyses the reaction N-terminal L-lysyl-[protein] + L-leucyl-tRNA(Leu) = N-terminal L-leucyl-L-lysyl-[protein] + tRNA(Leu) + H(+). The enzyme catalyses N-terminal L-arginyl-[protein] + L-leucyl-tRNA(Leu) = N-terminal L-leucyl-L-arginyl-[protein] + tRNA(Leu) + H(+). The catalysed reaction is L-phenylalanyl-tRNA(Phe) + an N-terminal L-alpha-aminoacyl-[protein] = an N-terminal L-phenylalanyl-L-alpha-aminoacyl-[protein] + tRNA(Phe). In terms of biological role, functions in the N-end rule pathway of protein degradation where it conjugates Leu, Phe and, less efficiently, Met from aminoacyl-tRNAs to the N-termini of proteins containing an N-terminal arginine or lysine. This is Leucyl/phenylalanyl-tRNA--protein transferase from Syntrophus aciditrophicus (strain SB).